Reading from the N-terminus, the 317-residue chain is Gamma-glutamyl hydrolase (317 aa).

Positions 1–24 (MANLGYLLCLLGLLLCGLSSPGMS) are cleaved as a signal peptide. Residues 25–317 (RPYNHGSERP…SSFQQAYMFD (293 aa)) enclose the Gamma-glutamyl hydrolase domain. Asn100 is a glycosylation site (N-linked (GlcNAc...) (high mannose) asparagine). Cys133 functions as the Nucleophile in the catalytic mechanism. N-linked (GlcNAc...) (high mannose) asparagine glycosylation is found at Asn162 and Asn188. A glycan (N-linked (GlcNAc...) asparagine) is linked at Asn202. The active-site Proton donor is the His243. N-linked (GlcNAc...) asparagine glycosylation occurs at Asn306.

The protein belongs to the peptidase C26 family. As to quaternary structure, homodimer. Isoform I (more expressed than isoform II in all tissues) is highly expressed in salivary gland, followed by kidney, liver, lung, stomach and uterus, and weakly expressed in small intestine, brain and fetal liver. Also expressed at a lower level in thymus, spleen and skeletal muscle. Also expressed in tumors.

The protein localises to the secreted. The protein resides in the extracellular space. It is found in the lysosome. Its subcellular location is the melanosome. It carries out the reaction (6S)-5,6,7,8-tetrahydrofolyl-(gamma-L-Glu)(n) + (n-1) H2O = (6S)-5,6,7,8-tetrahydrofolate + (n-1) L-glutamate. In terms of biological role, hydrolyzes the polyglutamate sidechains of pteroylpolyglutamates. Progressively removes gamma-glutamyl residues from pteroylpoly-gamma-glutamate to yield pteroyl-alpha-glutamate (folic acid) and free glutamate. May play an important role in the bioavailability of dietary pteroylpolyglutamates and in the metabolism of pteroylpolyglutamates and antifolates. The chain is Gamma-glutamyl hydrolase (Ggh) from Mus musculus (Mouse).